Consider the following 85-residue polypeptide: SKP1-like protein 6 (85 aa).

The segment at 65 to 85 (MMAANYLNIQSLLDLTFSNCR) is interaction with the F-box domain of F-box proteins.

The protein belongs to the SKP1 family. Part of a SCF (SKP1-cullin-F-box) protein ligase complex.

Its subcellular location is the nucleus. It participates in protein modification; protein ubiquitination. Functionally, involved in ubiquitination and subsequent proteasomal degradation of target proteins. Together with CUL1, RBX1 and a F-box protein, it forms a SCF E3 ubiquitin ligase complex. The functional specificity of this complex depends on the type of F-box protein. In the SCF complex, it serves as an adapter that links the F-box protein to CUL1. The polypeptide is SKP1-like protein 6 (ASK6) (Arabidopsis thaliana (Mouse-ear cress)).